Reading from the N-terminus, the 117-residue chain is Large ribosomal subunit protein bL19 (117 aa).

It belongs to the bacterial ribosomal protein bL19 family.

In terms of biological role, this protein is located at the 30S-50S ribosomal subunit interface and may play a role in the structure and function of the aminoacyl-tRNA binding site. The sequence is that of Large ribosomal subunit protein bL19 from Vibrio vulnificus (strain CMCP6).